We begin with the raw amino-acid sequence, 525 residues long: Glutamate--cysteine ligase (525 aa).

The protein belongs to the glutamate--cysteine ligase type 1 family. Type 1 subfamily.

It catalyses the reaction L-cysteine + L-glutamate + ATP = gamma-L-glutamyl-L-cysteine + ADP + phosphate + H(+). The protein operates within sulfur metabolism; glutathione biosynthesis; glutathione from L-cysteine and L-glutamate: step 1/2. In Hahella chejuensis (strain KCTC 2396), this protein is Glutamate--cysteine ligase.